Reading from the N-terminus, the 78-residue chain is Acyl carrier protein (78 aa).

Residues 1–77 form the Carrier domain; it reads MSEVEKKVID…DAIDYIEKNL (77 aa). S37 bears the O-(pantetheine 4'-phosphoryl)serine mark.

Belongs to the acyl carrier protein (ACP) family. 4'-phosphopantetheine is transferred from CoA to a specific serine of apo-ACP by AcpS. This modification is essential for activity because fatty acids are bound in thioester linkage to the sulfhydryl of the prosthetic group.

It localises to the cytoplasm. It functions in the pathway lipid metabolism; fatty acid biosynthesis. Its function is as follows. Carrier of the growing fatty acid chain in fatty acid biosynthesis. The chain is Acyl carrier protein from Porphyromonas gingivalis (strain ATCC 33277 / DSM 20709 / CIP 103683 / JCM 12257 / NCTC 11834 / 2561).